The following is an 821-amino-acid chain: Leucine--tRNA ligase (821 aa).

The short motif at 42–52 (PYPSGKLHMGH) is the 'HIGH' region element. Residues 583-587 (KMSKS) carry the 'KMSKS' region motif. Residue lysine 586 coordinates ATP.

It belongs to the class-I aminoacyl-tRNA synthetase family.

It localises to the cytoplasm. The enzyme catalyses tRNA(Leu) + L-leucine + ATP = L-leucyl-tRNA(Leu) + AMP + diphosphate. This chain is Leucine--tRNA ligase, found in Carboxydothermus hydrogenoformans (strain ATCC BAA-161 / DSM 6008 / Z-2901).